The following is a 405-amino-acid chain: MEEFHKVRRLPPYVFEQVNRLKASARAAGADIIDLGMGNPDLPTPQSIVDKLCEVVQDPRTHRYSSSKGIPGLRRAQAAYYARRFGVKLNPETQVVATLGSKEGFANMAQAITAPGDVVLCPNPTYPIHAFGFLMAGGVIRSISVEPDESFFPPLERAVRHSIPKPLALILNYPSNPTAQVATLDFYKDVIAFAKKHDIIVLSDLAYSEIYFDDAPPPSVLEVPGATDVTVEFTSMSKTFSMPGWRMGFAVGNERLIAALTRVKSYLDYGAFTPIQVAATQALNGDGSDIAEVRAIYKRRRDVMVESFGKAGFEVPPPPATMFAWAKIPEKFRHLGSLEFSKLLVEKADVAVAPGIGFGEQGDDYVRLALVENEHRIRQAARNIKRFLSSADETMHNVISLNAHR.

Position 238 is an N6-(pyridoxal phosphate)lysine (Lys238).

The protein belongs to the class-I pyridoxal-phosphate-dependent aminotransferase family. As to quaternary structure, homodimer. It depends on pyridoxal 5'-phosphate as a cofactor.

It localises to the cytoplasm. The polypeptide is Putative aminotransferase AatC (aatC) (Rhizobium meliloti (strain 1021) (Ensifer meliloti)).